We begin with the raw amino-acid sequence, 518 residues long: Phenylacetate 2-hydroxylase (518 aa).

C437 contributes to the heme binding site.

This sequence belongs to the cytochrome P450 family.

It carries out the reaction 2-phenylacetate + reduced [NADPH--hemoprotein reductase] + O2 = (2-hydroxyphenyl)acetate + oxidized [NADPH--hemoprotein reductase] + H2O + H(+). Its pathway is aromatic compound metabolism; phenylacetate degradation. Catalyzes the hydroxylation of phenylacetate to 2-hydroxyphenylacetate in the homogentisate pathway. The homogentisate pathway is used to catabolize phenylacetate and use it as a carbon source. Can also catalyze the hydroxylation of 3-hydroxyphenylacetate to 2,5-dihydroxyphenylacetate (homogentisate) at low efficiency. This is Phenylacetate 2-hydroxylase (phacA) from Emericella nidulans (Aspergillus nidulans).